Consider the following 134-residue polypeptide: DNA-directed RNA polymerase subunit omega (134 aa).

It belongs to the RNA polymerase subunit omega family. As to quaternary structure, the RNAP catalytic core consists of 2 alpha, 1 beta, 1 beta' and 1 omega subunit. When a sigma factor is associated with the core the holoenzyme is formed, which can initiate transcription.

The enzyme catalyses RNA(n) + a ribonucleoside 5'-triphosphate = RNA(n+1) + diphosphate. In terms of biological role, promotes RNA polymerase assembly. Latches the N- and C-terminal regions of the beta' subunit thereby facilitating its interaction with the beta and alpha subunits. The chain is DNA-directed RNA polymerase subunit omega from Rhizobium johnstonii (strain DSM 114642 / LMG 32736 / 3841) (Rhizobium leguminosarum bv. viciae).